Here is a 202-residue protein sequence, read N- to C-terminus: Peptide methionine sulfoxide reductase A3 (202 aa).

The disordered stretch occupies residues M1–G34. The residue at position 189 (S189) is a Phosphoserine.

It belongs to the MsrA Met sulfoxide reductase family. Expressed in rosette and cauline leaves, and at lower levels in roots, stems and flowers (at protein level).

It localises to the cytoplasm. The protein resides in the cytosol. The catalysed reaction is L-methionyl-[protein] + [thioredoxin]-disulfide + H2O = L-methionyl-(S)-S-oxide-[protein] + [thioredoxin]-dithiol. It carries out the reaction [thioredoxin]-disulfide + L-methionine + H2O = L-methionine (S)-S-oxide + [thioredoxin]-dithiol. Catalyzes the reduction of methionine sulfoxide (MetSO) to methionine in proteins. Plays a protective role against oxidative stress by restoring activity to proteins that have been inactivated by methionine oxidation. May prevent cellular oxidative damage due to light exposure. MSRA family specifically reduces the MetSO S-enantiomer. This Arabidopsis thaliana (Mouse-ear cress) protein is Peptide methionine sulfoxide reductase A3 (MSRA3).